The sequence spans 324 residues: NADH-ubiquinone oxidoreductase chain 1 (324 aa).

A run of 8 helical transmembrane segments spans residues Leu9 to Ile29, Phe75 to Met95, Leu106 to Gly126, Ile146 to Tyr166, Ser177 to Ala197, Leu228 to Phe248, Glu259 to Val279, and Phe299 to Gly319.

It belongs to the complex I subunit 1 family.

The protein resides in the mitochondrion inner membrane. The catalysed reaction is a ubiquinone + NADH + 5 H(+)(in) = a ubiquinol + NAD(+) + 4 H(+)(out). Core subunit of the mitochondrial membrane respiratory chain NADH dehydrogenase (Complex I) that is believed to belong to the minimal assembly required for catalysis. Complex I functions in the transfer of electrons from NADH to the respiratory chain. The immediate electron acceptor for the enzyme is believed to be ubiquinone. The polypeptide is NADH-ubiquinone oxidoreductase chain 1 (MT-ND1) (Cyprinus carpio (Common carp)).